A 218-amino-acid chain; its full sequence is uncharacterized protein (218 aa).

This is an uncharacterized protein from Methanocaldococcus jannaschii (strain ATCC 43067 / DSM 2661 / JAL-1 / JCM 10045 / NBRC 100440) (Methanococcus jannaschii).